The following is a 323-amino-acid chain: Ig gamma chain C region (323 aa).

3 consecutive Ig-like domains span residues 6-96 (PSVF…KTVA), 114-213 (PSVF…KTIS), and 222-318 (PKVY…KSIS).

The protein is Ig gamma chain C region of Oryctolagus cuniculus (Rabbit).